The chain runs to 125 residues: Protein sigma-1-small (125 aa).

This sequence belongs to the orthoreovirus sigma-1s protein family.

This is Protein sigma-1-small (S1) from Mammalia (T2J).